The sequence spans 490 residues: Phosphoglucosamine mutase (490 aa).

Ser139 functions as the Phosphoserine intermediate in the catalytic mechanism. Residues Ser139, Asp279, Asp281, and Asp283 each contribute to the Mg(2+) site. Ser139 is modified (phosphoserine).

The protein belongs to the phosphohexose mutase family. Mg(2+) serves as cofactor. Activated by phosphorylation.

The enzyme catalyses alpha-D-glucosamine 1-phosphate = D-glucosamine 6-phosphate. Functionally, catalyzes the conversion of glucosamine-6-phosphate to glucosamine-1-phosphate. This is Phosphoglucosamine mutase from Trichormus variabilis (strain ATCC 29413 / PCC 7937) (Anabaena variabilis).